Consider the following 233-residue polypeptide: uncharacterized protein (233 aa).

It belongs to the RHS family.

This is an uncharacterized protein from Escherichia coli (strain K12).